Reading from the N-terminus, the 863-residue chain is DNA replication licensing factor mcm4 (863 aa).

Residues 1–121 are disordered; sequence MSSPTSTPSR…ARQRPDLGSA (121 aa). 2 stretches are compositionally biased toward polar residues: residues 54–64 and 78–99; these read SPSGDLQSPSG and SALQSELDLSSPLTYGTPSSRV. The C4-type zinc finger occupies 306-331; that stretch reads CQVCAFTTRVEIDRGRISEPSVCKHC. The 210-residue stretch at 458-667 folds into the MCM domain; it reads IYERLASALA…YDRRLAHHLV (210 aa). ATP-binding residues include Y471, R497, K516, S517, N618, R643, R732, and E735. The Arginine finger signature appears at 642 to 645; the sequence is SRFD.

It belongs to the MCM family. In terms of assembly, component of the mcm2-7 complex (RLF-M). The complex forms a toroidal hexameric ring with the proposed subunit order mcm2-mcm6-mcm4-mcm7-mcm3-mcm5. The heterodimer of mmcm3/mcm5 interacts with mcm4, mmcm6, mcm7 and weakly with mcm2. Component of the CMG helicase complex, composed of the mcm2-7 complex, the GINS complex and cdc45. Hyperphosphorylated during mitosis in a mechanism requiring cdc2-cyclin B and other kinases. Undergoes dephosphorylation after exiting mitosis, existing in a partially phosphorylated state in the cytosolic interphase mcm complex which associates with the pre-replication complexes (pre-Rcs). Complete dephosphorylation inactivates the mcm complex, preventing its binding to chromatin. Becomes actively phosphorylated during S phase once the mcm complex is assembled on the chromatin. This chromatin-associated phosphorylation occurs during the activation of the pre-Rcs and is independent of cdks. Phosphorylated by the cdc7-dbf4b complex.

It localises to the nucleus. The protein localises to the chromosome. It catalyses the reaction ATP + H2O = ADP + phosphate + H(+). In terms of biological role, acts as a component of the MCM2-7 complex (MCM complex) which is the replicative helicase essential for 'once per cell cycle' DNA replication initiation and elongation in eukaryotic cells. Core component of CDC45-MCM-GINS (CMG) helicase, the molecular machine that unwinds template DNA during replication, and around which the replisome is built. The active ATPase sites in the MCM2-7 ring are formed through the interaction surfaces of two neighboring subunits such that a critical structure of a conserved arginine finger motif is provided in trans relative to the ATP-binding site of the Walker A box of the adjacent subunit. The six ATPase active sites, however, are likely to contribute differentially to the complex helicase activity. This is DNA replication licensing factor mcm4 from Xenopus tropicalis (Western clawed frog).